The sequence spans 429 residues: Enolase (429 aa).

A (2R)-2-phosphoglycerate-binding site is contributed by Gln163. The active-site Proton donor is Glu205. The Mg(2+) site is built by Asp242, Glu285, and Asp312. 4 residues coordinate (2R)-2-phosphoglycerate: Lys337, Arg366, Ser367, and Lys388. The active-site Proton acceptor is the Lys337.

This sequence belongs to the enolase family. Mg(2+) is required as a cofactor.

It localises to the cytoplasm. It is found in the secreted. The protein resides in the cell surface. The catalysed reaction is (2R)-2-phosphoglycerate = phosphoenolpyruvate + H2O. It participates in carbohydrate degradation; glycolysis; pyruvate from D-glyceraldehyde 3-phosphate: step 4/5. Its function is as follows. Catalyzes the reversible conversion of 2-phosphoglycerate (2-PG) into phosphoenolpyruvate (PEP). It is essential for the degradation of carbohydrates via glycolysis. This chain is Enolase, found in Methylorubrum extorquens (strain PA1) (Methylobacterium extorquens).